The chain runs to 222 residues: Ribosomal RNA small subunit methyltransferase G (222 aa).

S-adenosyl-L-methionine contacts are provided by residues glycine 84, phenylalanine 89, 141–142, and arginine 154; that span reads VE.

The protein belongs to the methyltransferase superfamily. RNA methyltransferase RsmG family.

Its subcellular location is the cytoplasm. The enzyme catalyses guanosine(527) in 16S rRNA + S-adenosyl-L-methionine = N(7)-methylguanosine(527) in 16S rRNA + S-adenosyl-L-homocysteine. In terms of biological role, specifically methylates the N7 position of guanine in position 527 of 16S rRNA. This Bradyrhizobium sp. (strain BTAi1 / ATCC BAA-1182) protein is Ribosomal RNA small subunit methyltransferase G.